We begin with the raw amino-acid sequence, 431 residues long: MQASIESTGNLERRLSFSLPEDRLQSHIVGRLGEIARTTRIKGFRPGKVPAKVIEQRFGAQVRGEALDGLLRETFDAAVREHDLRIVGSPRIDKGDEGEFSFVATVEVVPDFGDIDVSKLTVVRHTAEITDADIDQMIENLQNQRRTWAPVSRGAQDGDLVAVETWSQAGEERLPAEGTEKGSIVLGQGMMFETIEKGLVGLAKGEEKTLDVEFPADWRVPVLAGKTVQVTVKVAEVSEPVVPAVDEAFIKSFGVKGGDVEQFRSDIRANLERELKGALMNRLRREVGEQLIAAYSSVEMPPRLVENEARAMLAQQVEQIRRNGQSVGEIPADAHEGFKEAAAKRVLVGLLVGEVARINDLRLEAKRLNETMRLIASTYEEPEQVIEMYRNDPQLMSGLQNRVMEEQVIDWIAERAQHTEEKLSFQDAIRQ.

The region spanning 158 to 243 is the PPIase FKBP-type domain; it reads GDLVAVETWS…VAEVSEPVVP (86 aa).

It belongs to the FKBP-type PPIase family. Tig subfamily.

It localises to the cytoplasm. The enzyme catalyses [protein]-peptidylproline (omega=180) = [protein]-peptidylproline (omega=0). In terms of biological role, involved in protein export. Acts as a chaperone by maintaining the newly synthesized protein in an open conformation. Functions as a peptidyl-prolyl cis-trans isomerase. In Stenotrophomonas maltophilia (strain K279a), this protein is Trigger factor.